The chain runs to 538 residues: Solute carrier family 2, facilitated glucose transporter member 9 (538 aa).

Over 1–34 (MDSRELALASLMCDTGGPGELSVGHQQRRTKKWS) the chain is Cytoplasmic. Position 3 is a phosphoserine (serine 3). The helical transmembrane segment at 35-54 (FSLVVAALVGAFGSSFLYGY) threads the bilayer. Asparagine 55 and asparagine 71 each carry an N-linked (GlcNAc...) asparagine glycan. At 55-88 (NLSVVNAPTPYIKAFYNGTWYRRHGQPIDPDTLT) the chain is on the extracellular side. A helical transmembrane segment spans residues 89-109 (LLWSVTVSIFAIGGLVGTLMV). Topologically, residues 110 to 120 (KMIGKFLGRKS) are cytoplasmic. Residues 121-143 (TLLVNNGFAISAALLMACSLRAG) form a helical membrane-spanning segment. Over 144 to 148 (TFEML) the chain is Extracellular. Residues 149–170 (IVGRFIMGVDGGIALSALPMYL) traverse the membrane as a helical segment. Residues 171-181 (NEISPKEIRGS) are Cytoplasmic-facing. Residues 182 to 200 (LGQVTAIFICIGVFSGQLL) form a helical membrane-spanning segment. The Extracellular segment spans residues 201-211 (GLPELLGREST). The chain crosses the membrane as a helical span at residues 212 to 233 (WPYLFGVIIVPALVQLASLPFL). The Cytoplasmic segment spans residues 234 to 297 (PESPRYLLFE…LLRAPFVRWQ (64 aa)). A helical transmembrane segment spans residues 298–319 (VITVIITMASYQLCGLNAIWFY). Topologically, residues 320–333 (TNSIFGKAGIPQDK) are extracellular. The helical transmembrane segment at 334 to 356 (IPYITLSTGGIETLAAIFSGLVI) threads the bilayer. The Cytoplasmic segment spans residues 357-362 (ERLGRR). Residues 363–385 (PLLIGGFGLMALFFGTLTATLTL) traverse the membrane as a helical segment. Residues 386-390 (QDQAP) lie on the Extracellular side of the membrane. The helical transmembrane segment at 391 to 418 (WVPYLSIVCILAIIASFCSGPGGIPFIL) threads the bilayer. At 419–429 (TGEFFQQSERP) the chain is on the cytoplasmic side. The helical transmembrane segment at 430–453 (AAFMIAGTVNWLSNFAVGLLFPFI) threads the bilayer. Topologically, residues 454 to 458 (QKSLD) are extracellular. The helical transmembrane segment at 459-480 (SYCFLVFATICIAGATYFYFVL) threads the bilayer. Residues 481 to 538 (PETKNRTHAEISQAFAKRNKAQPPEVKADSAMTEEKANSQTEPDSSSTLDSYGQNKIV) are Cytoplasmic-facing. A disordered region spans residues 495–538 (FAKRNKAQPPEVKADSAMTEEKANSQTEPDSSSTLDSYGQNKIV). Over residues 518–538 (NSQTEPDSSSTLDSYGQNKIV) the composition is skewed to polar residues.

This sequence belongs to the major facilitator superfamily. Sugar transporter (TC 2.A.1.1) family. In terms of processing, N-glycosylated. As to expression, highly expressed in the intestine, with high expression in the jejunum and ileum, the segments of the intestine that perform the majority of urate excretion. Isoform 1: Widely expressed. Isoform 1: In kidney, expressed at low levels in proximal tubules. Isoform 2: Primarily expressed in liver and kidney; with specific expression in distal convoluted and connecting tubules of kidney.

It localises to the basolateral cell membrane. It is found in the apical cell membrane. It catalyses the reaction urate(out) = urate(in). High-capacity urate transporter, which may play a role in the urate reabsorption by proximal tubules. May have a residual high-affinity, low-capacity glucose and fructose transporter activity. Transports urate at rates 45- to 60-fold faster than glucose. Does not transport galactose. May mediate small uptake of adenine but not of other nucleobases. The protein is Solute carrier family 2, facilitated glucose transporter member 9 of Mus musculus (Mouse).